Reading from the N-terminus, the 311-residue chain is Nudix hydrolase 9 (311 aa).

The Nudix hydrolase domain maps to 131–298 (SSPLGNGAVI…GFALYELMLQ (168 aa)). Positions 192 to 213 (LNKKVTQEMFDSIICEVVEETG) match the Nudix box motif. The Mg(2+) site is built by Glu207 and Glu211.

The protein belongs to the Nudix hydrolase family. Mg(2+) is required as a cofactor. Requires Mn(2+) as cofactor. Expressed in roots, stems and leaves.

In terms of biological role, probably mediates the hydrolysis of some nucleoside diphosphate derivatives. The sequence is that of Nudix hydrolase 9 (NUDT9) from Arabidopsis thaliana (Mouse-ear cress).